The following is a 790-amino-acid chain: Cadherin-6 (790 aa).

The N-terminal stretch at 1–30 (MRTYHCFWLLFWAGQPHQSFLTLLSKRTSG) is a signal peptide. Residues 31-53 (FPEKEKVLVLSGNSRRDLSRSKR) constitute a propeptide that is removed on maturation. Cadherin domains follow at residues 54 to 159 (SWMW…EPMF), 160 to 268 (TKDV…PPRF), 269 to 383 (PQST…PPVF), 384 to 486 (SRPA…DNAP), and 487 to 608 (EFAM…LIHP). Over 54 to 615 (SWMWNQFFLL…IHPTGLSTGA (562 aa)) the chain is Extracellular. Residues N165 and N255 are each glycosylated (N-linked (GlcNAc...) asparagine). The disordered stretch occupies residues 261–289 (VNDNPPRFPQSTYQFRAPESTPPDSPIGR). N437, N455, and N536 each carry an N-linked (GlcNAc...) asparagine glycan. The helical transmembrane segment at 616 to 636 (LIAILLCIIILLVTVVLFAAL) threads the bilayer. The Cytoplasmic portion of the chain corresponds to 637–790 (RRQRKKEPLI…YGSMDSDKDS (154 aa)).

The protein localises to the cell membrane. Cadherins are calcium-dependent cell adhesion proteins. They preferentially interact with themselves in a homophilic manner in connecting cells; cadherins may thus contribute to the sorting of heterogeneous cell types. This is Cadherin-6 (CDH6) from Gallus gallus (Chicken).